The primary structure comprises 333 residues: 5-formaminoimidazole-4-carboxamide-1-(beta)-D-ribofuranosyl 5'-monophosphate synthetase (333 aa).

2 residues coordinate 5-amino-1-(5-phospho-beta-D-ribosyl)imidazole-4-carboxamide: His-10 and Ser-74. The region spanning Arg-95–Asn-324 is the ATP-grasp domain. ATP-binding positions include Val-125–Tyr-185 and Glu-207. Asn-230 lines the 5-amino-1-(5-phospho-beta-D-ribosyl)imidazole-4-carboxamide pocket. 2 residues coordinate Mg(2+): Glu-269 and Glu-282.

It belongs to the phosphohexose mutase family. Mg(2+) is required as a cofactor. Mn(2+) serves as cofactor.

The catalysed reaction is 5-amino-1-(5-phospho-beta-D-ribosyl)imidazole-4-carboxamide + formate + ATP = 5-formamido-1-(5-phospho-D-ribosyl)imidazole-4-carboxamide + ADP + phosphate. The protein operates within purine metabolism; IMP biosynthesis via de novo pathway; 5-formamido-1-(5-phospho-D-ribosyl)imidazole-4-carboxamide from 5-amino-1-(5-phospho-D-ribosyl)imidazole-4-carboxamide (formate route): step 1/1. Functionally, catalyzes the ATP- and formate-dependent formylation of 5-aminoimidazole-4-carboxamide-1-beta-d-ribofuranosyl 5'-monophosphate (AICAR) to 5-formaminoimidazole-4-carboxamide-1-beta-d-ribofuranosyl 5'-monophosphate (FAICAR) in the absence of folates. The sequence is that of 5-formaminoimidazole-4-carboxamide-1-(beta)-D-ribofuranosyl 5'-monophosphate synthetase from Sulfolobus acidocaldarius (strain ATCC 33909 / DSM 639 / JCM 8929 / NBRC 15157 / NCIMB 11770).